We begin with the raw amino-acid sequence, 424 residues long: UPF0229 protein Ping_2705 (424 aa).

The tract at residues 77-108 (PGNQDFIGGDRIERPPSGGAGGSGSGASDSGK) is disordered.

This sequence belongs to the UPF0229 family.

In Psychromonas ingrahamii (strain DSM 17664 / CCUG 51855 / 37), this protein is UPF0229 protein Ping_2705.